A 244-amino-acid chain; its full sequence is Phosphoadenosine 5'-phosphosulfate reductase (244 aa).

The Nucleophile; cysteine thiosulfonate intermediate role is filled by Cys239.

It belongs to the PAPS reductase family. CysH subfamily.

It is found in the cytoplasm. The catalysed reaction is [thioredoxin]-disulfide + sulfite + adenosine 3',5'-bisphosphate + 2 H(+) = [thioredoxin]-dithiol + 3'-phosphoadenylyl sulfate. Its pathway is sulfur metabolism; hydrogen sulfide biosynthesis; sulfite from sulfate: step 3/3. Catalyzes the formation of sulfite from phosphoadenosine 5'-phosphosulfate (PAPS) using thioredoxin as an electron donor. In Buchnera aphidicola subsp. Acyrthosiphon pisum (strain Tuc7), this protein is Phosphoadenosine 5'-phosphosulfate reductase.